The following is a 369-amino-acid chain: UDP-N-acetylglucosamine--N-acetylmuramyl-(pentapeptide) pyrophosphoryl-undecaprenol N-acetylglucosamine transferase (369 aa).

UDP-N-acetyl-alpha-D-glucosamine is bound by residues 16 to 18, asparagine 130, arginine 171, serine 196, and glutamine 297; that span reads TGG.

The protein belongs to the glycosyltransferase 28 family. MurG subfamily.

The protein resides in the cell inner membrane. The catalysed reaction is di-trans,octa-cis-undecaprenyl diphospho-N-acetyl-alpha-D-muramoyl-L-alanyl-D-glutamyl-meso-2,6-diaminopimeloyl-D-alanyl-D-alanine + UDP-N-acetyl-alpha-D-glucosamine = di-trans,octa-cis-undecaprenyl diphospho-[N-acetyl-alpha-D-glucosaminyl-(1-&gt;4)]-N-acetyl-alpha-D-muramoyl-L-alanyl-D-glutamyl-meso-2,6-diaminopimeloyl-D-alanyl-D-alanine + UDP + H(+). Its pathway is cell wall biogenesis; peptidoglycan biosynthesis. Its function is as follows. Cell wall formation. Catalyzes the transfer of a GlcNAc subunit on undecaprenyl-pyrophosphoryl-MurNAc-pentapeptide (lipid intermediate I) to form undecaprenyl-pyrophosphoryl-MurNAc-(pentapeptide)GlcNAc (lipid intermediate II). The sequence is that of UDP-N-acetylglucosamine--N-acetylmuramyl-(pentapeptide) pyrophosphoryl-undecaprenol N-acetylglucosamine transferase from Desulfotalea psychrophila (strain LSv54 / DSM 12343).